Consider the following 215-residue polypeptide: Probable Rab-related GTPase (215 aa).

20-27 (GSSGVGKS) is a binding site for GTP. An Effector region motif is present at residues 42-50 (VSPTIGAAF). GTP contacts are provided by residues 69 to 73 (DTAGQ) and 127 to 130 (NKID). 2 S-geranylgeranyl cysteine; by host lipidation sites follow: cysteine 211 and cysteine 212. A Cysteine methyl ester; by host modification is found at cysteine 212. A propeptide spans 213 to 215 (YIS) (removed in mature form).

It belongs to the small GTPase superfamily. Rab family.

It localises to the host cell membrane. Its function is as follows. May be involved in protein transport. The protein is Probable Rab-related GTPase of Acanthamoeba polyphaga mimivirus (APMV).